The chain runs to 416 residues: Chorismate synthase (416 aa).

The NADP(+) site is built by Arg-40 and Arg-46. FMN contacts are provided by residues 135-137 (RAS), 256-257 (QA), Gly-300, 315-319 (KPIAT), and Arg-341.

This sequence belongs to the chorismate synthase family. Homotetramer. FMNH2 serves as cofactor.

The catalysed reaction is 5-O-(1-carboxyvinyl)-3-phosphoshikimate = chorismate + phosphate. Its pathway is metabolic intermediate biosynthesis; chorismate biosynthesis; chorismate from D-erythrose 4-phosphate and phosphoenolpyruvate: step 7/7. Catalyzes the anti-1,4-elimination of the C-3 phosphate and the C-6 proR hydrogen from 5-enolpyruvylshikimate-3-phosphate (EPSP) to yield chorismate, which is the branch point compound that serves as the starting substrate for the three terminal pathways of aromatic amino acid biosynthesis. This reaction introduces a second double bond into the aromatic ring system. The sequence is that of Chorismate synthase from Kocuria rhizophila (strain ATCC 9341 / DSM 348 / NBRC 103217 / DC2201).